Reading from the N-terminus, the 275-residue chain is Large ribosomal subunit protein uL2c (275 aa).

Disordered regions lie at residues 1 to 28 and 227 to 251; these read MGIR…TKSK and PCDH…TPWG. Over residues 10-22 the composition is skewed to polar residues; it reads TPGTRNRSSSDFS.

It belongs to the universal ribosomal protein uL2 family. In terms of assembly, part of the 50S ribosomal subunit.

Its subcellular location is the plastid. It is found in the chloroplast. This is Large ribosomal subunit protein uL2c (rpl2) from Rhodomonas salina (Cryptomonas salina).